Here is a 630-residue protein sequence, read N- to C-terminus: ATP-dependent RNA helicase mrh4, mitochondrial (630 aa).

The transit peptide at 1–46 directs the protein to the mitochondrion; the sequence is MNRLGGLSLPLRPVCLFCRAQTSLALSPLQGGQAVRSIATGRLRRR. The disordered stretch occupies residues 46–108; the sequence is RARMTLSKDV…GETEEKPAMN (63 aa). The short motif at 167 to 174 is the Q motif element; the sequence is DAVPTPIQ. The region spanning 195-407 is the Helicase ATP-binding domain; the sequence is DDDEPQYEQY…RKLYPDIWRL (213 aa). 208 to 215 is a binding site for ATP; the sequence is AETGSGKT. The segment covering 235–255 has biased composition (basic and acidic residues); sequence EMEKKEEERKVREREENKKNQ. The disordered stretch occupies residues 235–265; that stretch reads EMEKKEEERKVREREENKKNQAFDLEPEIPP. The short motif at 354 to 357 is the DEAD box element; sequence DEAD. The region spanning 452 to 630 is the Helicase C-terminal domain; the sequence is GSDEAGSPWS…VREVWFGLDS (179 aa).

The protein belongs to the DEAD box helicase family. MRH4 subfamily.

Its subcellular location is the mitochondrion. The catalysed reaction is ATP + H2O = ADP + phosphate + H(+). In terms of biological role, ATP-binding RNA helicase involved in mitochondrial RNA metabolism. Required for maintenance of mitochondrial DNA. This Emericella nidulans (strain FGSC A4 / ATCC 38163 / CBS 112.46 / NRRL 194 / M139) (Aspergillus nidulans) protein is ATP-dependent RNA helicase mrh4, mitochondrial (mrh4).